The following is a 625-amino-acid chain: MQNTAKKATLPATALAALGVVFGDIGTSPLYALKESFHAAHGLGIQPENVLGILSIIFWCLMLIISIKYVAIVMRADNNGEGGIMALLALNLRKAKIADNKKIYMIAIGFIGASLFFGDGIITPAISVLSAVEGLSIATDVFDPFIMPIAIAIIVTLFLVQKHGPAFVGKFFGPITLVWFLSLGILGIHSVIQTPVVLGMFSPHWAIQFIYHHPIMTFFVMGAVVLTVTGGEALYADMGHFGPVPIRLAWFFVVLPCLVLNYAGQGALLLRDPAAIENPFYLLVPQWALYPMIIMATMATVIASQAVISGVFSLARQAIQLGYLPRLSIKHTSESEEGQIYVPFLNWLLLIAIIILILIFKTSSNLASAYGLAVTLTMLCDTILVAVFIYSAWKWSLPKVLILIIPFFILESVLVGATSLKILSGGWVPLLIGAIAVTILMTWKRGRELTFAKLEHDTLSLDLFVKSIGNSVHWVPGDAVFMTGTPNVVPHAMLHNIKHNKVLHQRNILVTVVIEDVPFVAPEERITTETLAEHFFRIKIFYGFKDEMNVPKALMQAYEQLGLEYDLMHISFFISRDRIVHSVGDGMSPWREKLFISMQRNTSPVSDFYQIPTNRVVELGSQIEI.

Transmembrane regions (helical) follow at residues 13–33 (TALA…LYAL), 53–73 (ILSI…VAIV), 103–123 (IYMI…GIIT), 141–161 (VFDP…FLVQ), 172–192 (FGPI…HSVI), 206–226 (AIQF…AVVL), 250–270 (WFFV…ALLL), 282–302 (LLVP…ATVI), 340–360 (IYVP…ILIF), 369–389 (AYGL…AVFI), 400–420 (VLIL…ATSL), and 422–442 (ILSG…ILMT).

Belongs to the HAK/KUP transporter (TC 2.A.72) family.

Its subcellular location is the cell inner membrane. The enzyme catalyses K(+)(in) + H(+)(in) = K(+)(out) + H(+)(out). In terms of biological role, transport of potassium into the cell. Likely operates as a K(+):H(+) symporter. The sequence is that of Probable potassium transport system protein Kup from Acinetobacter baumannii (strain SDF).